A 515-amino-acid polypeptide reads, in one-letter code: Fatty acyl-CoA reductase 1 (515 aa).

At 1–465 (MVSIPEYYEG…ARKHLNKLRN (465 aa)) the chain is on the cytoplasmic side. Residues 466–483 (IRYGFNTILVILIWRIFI) traverse the membrane as a helical segment. The Peroxisomal portion of the chain corresponds to 484–515 (ARSQMARNIWYFVVSLCYKFLSYFRASSTMRY).

It belongs to the fatty acyl-CoA reductase family.

Its subcellular location is the peroxisome membrane. The catalysed reaction is a long-chain fatty acyl-CoA + 2 NADPH + 2 H(+) = a long-chain primary fatty alcohol + 2 NADP(+) + CoA. It carries out the reaction hexadecanoyl-CoA + 2 NADPH + 2 H(+) = hexadecan-1-ol + 2 NADP(+) + CoA. It catalyses the reaction octadecanoyl-CoA + 2 NADPH + 2 H(+) = octadecan-1-ol + 2 NADP(+) + CoA. The enzyme catalyses (9Z)-octadecenoyl-CoA + 2 NADPH + 2 H(+) = (9Z)-octadecen-1-ol + 2 NADP(+) + CoA. The catalysed reaction is (9Z,12Z)-octadecadienoyl-CoA + 2 NADPH + 2 H(+) = (9Z,12Z)-octadecadien-1-ol + 2 NADP(+) + CoA. It carries out the reaction eicosanoyl-CoA + 2 NADPH + 2 H(+) = eicosan-1-ol + 2 NADP(+) + CoA. It catalyses the reaction 16-methylheptadecanoyl-CoA + 2 NADPH + 2 H(+) = 16-methylheptadecan-1-ol + 2 NADP(+) + CoA. The enzyme catalyses 18-methylnonadecanoyl-CoA + 2 NADPH + 2 H(+) = 18-methylnonadecan-1-ol + 2 NADP(+) + CoA. Its function is as follows. Catalyzes the reduction of saturated and unsaturated C16 or C18 fatty acyl-CoA to fatty alcohols. It plays an essential role in the production of ether lipids/plasmalogens which synthesis requires fatty alcohols. In parallel, it is also required for wax monoesters production since fatty alcohols also constitute a substrate for their synthesis. The sequence is that of Fatty acyl-CoA reductase 1 from Gallus gallus (Chicken).